Here is an 82-residue protein sequence, read N- to C-terminus: Large ribosomal subunit protein uL23 (82 aa).

Belongs to the universal ribosomal protein uL23 family. In terms of assembly, part of the 50S ribosomal subunit. Contacts protein L29.

Its function is as follows. Binds to 23S rRNA. One of the proteins that surrounds the polypeptide exit tunnel on the outside of the ribosome. The chain is Large ribosomal subunit protein uL23 from Methanosarcina barkeri (strain Fusaro / DSM 804).